The following is a 460-amino-acid chain: ATP synthase subunit beta (460 aa).

An ATP-binding site is contributed by 150-157; that stretch reads GGAGVGKT.

The protein belongs to the ATPase alpha/beta chains family. F-type ATPases have 2 components, CF(1) - the catalytic core - and CF(0) - the membrane proton channel. CF(1) has five subunits: alpha(3), beta(3), gamma(1), delta(1), epsilon(1). CF(0) has three main subunits: a(1), b(2) and c(9-12). The alpha and beta chains form an alternating ring which encloses part of the gamma chain. CF(1) is attached to CF(0) by a central stalk formed by the gamma and epsilon chains, while a peripheral stalk is formed by the delta and b chains.

The protein localises to the cell inner membrane. The catalysed reaction is ATP + H2O + 4 H(+)(in) = ADP + phosphate + 5 H(+)(out). Functionally, produces ATP from ADP in the presence of a proton gradient across the membrane. The catalytic sites are hosted primarily by the beta subunits. The chain is ATP synthase subunit beta from Enterobacter sp. (strain 638).